The following is a 146-amino-acid chain: 3-hydroxyacyl-[acyl-carrier-protein] dehydratase FabZ (146 aa).

His48 is a catalytic residue.

It belongs to the thioester dehydratase family. FabZ subfamily.

The protein localises to the cytoplasm. It catalyses the reaction a (3R)-hydroxyacyl-[ACP] = a (2E)-enoyl-[ACP] + H2O. Functionally, involved in unsaturated fatty acids biosynthesis. Catalyzes the dehydration of short chain beta-hydroxyacyl-ACPs and long chain saturated and unsaturated beta-hydroxyacyl-ACPs. The sequence is that of 3-hydroxyacyl-[acyl-carrier-protein] dehydratase FabZ from Teredinibacter turnerae (strain ATCC 39867 / T7901).